The sequence spans 57 residues: Large ribosomal subunit protein bL32 (57 aa).

This sequence belongs to the bacterial ribosomal protein bL32 family.

The protein is Large ribosomal subunit protein bL32 of Streptomyces griseus subsp. griseus (strain JCM 4626 / CBS 651.72 / NBRC 13350 / KCC S-0626 / ISP 5235).